The primary structure comprises 259 residues: Peroxiredoxin-4 (259 aa).

The Thioredoxin domain maps to 66 to 224; it reads IRIRKPAPAF…AIRTLKALKF (159 aa). The active-site Cysteine sulfenic acid (-SOH) intermediate is C111.

Belongs to the peroxiredoxin family. AhpC/Prx1 subfamily. Homodimer; disulfide-linked, upon oxidation. 5 homodimers assemble to form a ring-like decamer.

It is found in the cytoplasm. It localises to the endoplasmic reticulum. The enzyme catalyses a hydroperoxide + [thioredoxin]-dithiol = an alcohol + [thioredoxin]-disulfide + H2O. Functionally, thiol-specific peroxidase that catalyzes the reduction of hydrogen peroxide and organic hydroperoxides to water and alcohols, respectively. Plays a role in cell protection against oxidative stress by detoxifying peroxides and as sensor of hydrogen peroxide-mediated signaling events. Regulates the activation of NF-kappa-B in the cytosol by a modulation of I-kappa-B-alpha phosphorylation. The polypeptide is Peroxiredoxin-4 (prdx4) (Dictyostelium discoideum (Social amoeba)).